Consider the following 177-residue polypeptide: Interleukin-1 receptor antagonist protein (177 aa).

The N-terminal stretch at 1–25 (MEICRGLRSHLITLLLFLFHSETIC) is a signal peptide. A disulfide bridge links Cys91 with Cys141. The N-linked (GlcNAc...) asparagine glycan is linked to Asn109.

This sequence belongs to the IL-1 family. In terms of tissue distribution, the intracellular form of IL1RN is predominantly expressed in epithelial cells.

It localises to the secreted. The protein resides in the cytoplasm. In terms of biological role, anti-inflammatory antagonist of interleukin-1 family of proinflammatory cytokines such as interleukin-1beta/IL1B and interleukin-1alpha/IL1A. Protects from immune dysregulation and uncontrolled systemic inflammation triggered by IL1 for a range of innate stimulatory agents such as pathogens. In Homo sapiens (Human), this protein is Interleukin-1 receptor antagonist protein (IL1RN).